Reading from the N-terminus, the 316-residue chain is Methionyl-tRNA formyltransferase (316 aa).

S114 to P117 provides a ligand contact to (6S)-5,6,7,8-tetrahydrofolate.

Belongs to the Fmt family.

It carries out the reaction L-methionyl-tRNA(fMet) + (6R)-10-formyltetrahydrofolate = N-formyl-L-methionyl-tRNA(fMet) + (6S)-5,6,7,8-tetrahydrofolate + H(+). In terms of biological role, attaches a formyl group to the free amino group of methionyl-tRNA(fMet). The formyl group appears to play a dual role in the initiator identity of N-formylmethionyl-tRNA by promoting its recognition by IF2 and preventing the misappropriation of this tRNA by the elongation apparatus. This chain is Methionyl-tRNA formyltransferase, found in Aromatoleum aromaticum (strain DSM 19018 / LMG 30748 / EbN1) (Azoarcus sp. (strain EbN1)).